A 212-amino-acid chain; its full sequence is Adenylate kinase (212 aa).

Residue Gly10 to Thr15 participates in ATP binding. The interval Ala30–Ile59 is NMP. AMP contacts are provided by residues Arg36, Glu57–Ile59, Gly85–Arg88, and Gln92. The segment at Gly122 to Asp160 is LID. Arg123 contacts ATP. 2 residues coordinate Zn(2+): Cys126 and Cys129. ATP is bound at residue Ile132–Tyr133. Zn(2+) contacts are provided by Cys146 and Cys149. Positions 157 and 168 each coordinate AMP. Lys196 is a binding site for ATP.

It belongs to the adenylate kinase family. Monomer.

Its subcellular location is the cytoplasm. The enzyme catalyses AMP + ATP = 2 ADP. The protein operates within purine metabolism; AMP biosynthesis via salvage pathway; AMP from ADP: step 1/1. Catalyzes the reversible transfer of the terminal phosphate group between ATP and AMP. Plays an important role in cellular energy homeostasis and in adenine nucleotide metabolism. This is Adenylate kinase from Rickettsia peacockii (strain Rustic).